The primary structure comprises 172 residues: Pollen-specific protein-like At4g18596 (172 aa).

Positions 1-27 (MASKAIFFFFVSAVCLSSLAGVAIADA) are cleaved as a signal peptide. Intrachain disulfides connect Cys41-Cys112, Cys44-Cys157, and Cys65-Cys100. Asn70 carries N-linked (GlcNAc...) asparagine glycosylation.

It belongs to the Ole e I family.

The protein resides in the secreted. This is Pollen-specific protein-like At4g18596 from Arabidopsis thaliana (Mouse-ear cress).